Here is a 100-residue protein sequence, read N- to C-terminus: Urease subunit gamma (100 aa).

It belongs to the urease gamma subunit family. As to quaternary structure, heterotrimer of UreA (gamma), UreB (beta) and UreC (alpha) subunits. Three heterotrimers associate to form the active enzyme.

Its subcellular location is the cytoplasm. The catalysed reaction is urea + 2 H2O + H(+) = hydrogencarbonate + 2 NH4(+). It participates in nitrogen metabolism; urea degradation; CO(2) and NH(3) from urea (urease route): step 1/1. This is Urease subunit gamma from Magnetococcus marinus (strain ATCC BAA-1437 / JCM 17883 / MC-1).